We begin with the raw amino-acid sequence, 71 residues long: Large ribosomal subunit protein uL30 (71 aa).

Belongs to the universal ribosomal protein uL30 family. In terms of assembly, part of the 50S ribosomal subunit.

The protein is Large ribosomal subunit protein uL30 of Mycolicibacterium paratuberculosis (strain ATCC BAA-968 / K-10) (Mycobacterium paratuberculosis).